We begin with the raw amino-acid sequence, 269 residues long: 3-methyl-2-oxobutanoate hydroxymethyltransferase (269 aa).

2 residues coordinate Mg(2+): D43 and D82. 3-methyl-2-oxobutanoate is bound by residues 43 to 44, D82, and K110; that span reads DS. Residue E112 participates in Mg(2+) binding. Residue E179 is the Proton acceptor of the active site.

Belongs to the PanB family. As to quaternary structure, homodecamer; pentamer of dimers. The cofactor is Mg(2+).

Its subcellular location is the cytoplasm. It carries out the reaction 3-methyl-2-oxobutanoate + (6R)-5,10-methylene-5,6,7,8-tetrahydrofolate + H2O = 2-dehydropantoate + (6S)-5,6,7,8-tetrahydrofolate. It participates in cofactor biosynthesis; (R)-pantothenate biosynthesis; (R)-pantoate from 3-methyl-2-oxobutanoate: step 1/2. Catalyzes the reversible reaction in which hydroxymethyl group from 5,10-methylenetetrahydrofolate is transferred onto alpha-ketoisovalerate to form ketopantoate. This Acinetobacter baumannii (strain SDF) protein is 3-methyl-2-oxobutanoate hydroxymethyltransferase.